The primary structure comprises 425 residues: Cyanogenic beta-glucosidase (425 aa).

Positions 1 to 11 (LLSITTTHIHA) are cleaved as a signal peptide. Residues Gln44, His148, and 193-194 (NE) contribute to the a beta-D-glucoside site. The Proton donor role is filled by Glu194. Cys213 and Cys221 are disulfide-bonded. Asn220 carries an N-linked (GlcNAc...) asparagine glycan. The a beta-D-glucoside site is built by Tyr337 and Glu408. Catalysis depends on Glu408, which acts as the Nucleophile. Asn412 is a glycosylation site (N-linked (GlcNAc...) asparagine).

Belongs to the glycosyl hydrolase 1 family. In terms of assembly, homodimer. Leaves.

The catalysed reaction is Hydrolysis of terminal, non-reducing beta-D-glucosyl residues with release of beta-D-glucose.. In terms of biological role, hydrolyzes cyanoglucosides, contributing to the release of hydrocyanic acid, which functions as a defense mechanism against small predators, when the leaf tissue is damaged. This Trifolium repens (Creeping white clover) protein is Cyanogenic beta-glucosidase (LI).